Consider the following 181-residue polypeptide: Large ribosomal subunit protein uL5 (181 aa).

The protein belongs to the universal ribosomal protein uL5 family. Part of the 50S ribosomal subunit; part of the 5S rRNA/L5/L18/L25 subcomplex. Contacts the 5S rRNA and the P site tRNA. Forms a bridge to the 30S subunit in the 70S ribosome.

Its function is as follows. This is one of the proteins that bind and probably mediate the attachment of the 5S RNA into the large ribosomal subunit, where it forms part of the central protuberance. In the 70S ribosome it contacts protein S13 of the 30S subunit (bridge B1b), connecting the 2 subunits; this bridge is implicated in subunit movement. Contacts the P site tRNA; the 5S rRNA and some of its associated proteins might help stabilize positioning of ribosome-bound tRNAs. The chain is Large ribosomal subunit protein uL5 from Mesomycoplasma hyopneumoniae (strain 232) (Mycoplasma hyopneumoniae).